The sequence spans 931 residues: Probable zinc protease PqqL (931 aa).

Histidine 80 contributes to the Zn(2+) binding site. Glutamate 83 acts as the Proton acceptor in catalysis. Zn(2+) contacts are provided by histidine 84 and glutamate 160.

It belongs to the peptidase M16 family. Zn(2+) serves as cofactor.

In Escherichia coli (strain K12), this protein is Probable zinc protease PqqL (pqqL).